The sequence spans 988 residues: Protein argonaute 10 (988 aa).

A compositionally biased stretch (basic and acidic residues) spans 1 to 11; the sequence is MPIRQMKDSSE. A disordered region spans residues 1 to 103; that stretch reads MPIRQMKDSS…PPSQTTSSAV (103 aa). A compositionally biased stretch (low complexity) spans 41–57; that stretch reads PVTVTTPATVTQSQASS. Residues 64-73 show a composition bias toward basic residues; the sequence is NRSRRRNRGG. A PAZ domain is found at 338 to 451; sequence PVIEFVAQLL…LPMEACKIVE (114 aa). One can recognise a Piwi domain in the interval 625-946; that stretch reads LLLAILPDNN…AAFRARFYLE (322 aa).

The protein belongs to the argonaute family. Ago subfamily. Interacts with GATA18/HAN and KNAT1/BP. Interacts with RICE1 and RICE2 that act as cofactors. Expressed in roots, stems, leaves, developing embryo, siliques, inflorescences, provascular tissue, shoot apical meristem (SAM) and adaxial (upper) sides of lateral organ primordia. Observed in the floral meristem, the adaxial side of sepal primordia, and the provascular tissue.

The protein localises to the cytoplasm. Involved in RNA-mediated post-transcriptional gene silencing (PTGS). Main component of the RNA-induced silencing complex (RISC) that binds to a short guide RNA such as a microRNA (miRNA) or small interfering RNA (siRNA). RISC uses the mature miRNA or siRNA as a guide for slicer-directed cleavage of homologous mRNAs to repress gene expression. Required for reliable formation of primary and axillary shoot apical meristems. Specifies leaf adaxial identity by repressing the miR165 and miR166 microRNAs in the embryonic shoot apex, in the shoot apical meristem (SAM) and leaf. Represses the microRNA miR398 which targets CCS1 chaperone mRNAs for translational inhibition. Acts as a negative regulator of AGO1 protein level. Like AGO1, is required for stem cell function and organ polarity. Unlike AGO1, is not subjected to small RNA-mediated repression itself. Essential for multiple processes in development. Coregulates, with GATA18/HAN, the shoot apical meristem (SAM) organization. This Arabidopsis thaliana (Mouse-ear cress) protein is Protein argonaute 10.